Consider the following 165-residue polypeptide: Nascent polypeptide-associated complex subunit beta (165 aa).

Disordered regions lie at residues 1–34 (MDQA…TSGA) and 133–165 (QNMQ…KSVD). Residues 20-30 (TPRRKVKKVHK) show a composition bias toward basic residues. The NAC-A/B domain occupies 33–110 (GADDKKLQAT…GEEKELTELV (78 aa)). Residues 145–158 (DDDEDDIPDLVEGE) show a composition bias toward acidic residues.

It belongs to the NAC-beta family. In terms of assembly, part of the nascent polypeptide-associated complex (NAC), consisting of egd2 and egd1. NAC associates with ribosomes via egd1.

Its subcellular location is the cytoplasm. The protein localises to the nucleus. Component of the nascent polypeptide-associated complex (NAC), a dynamic component of the ribosomal exit tunnel, protecting the emerging polypeptides from interaction with other cytoplasmic proteins to ensure appropriate nascent protein targeting. The NAC complex also promotes mitochondrial protein import by enhancing productive ribosome interactions with the outer mitochondrial membrane and blocks the inappropriate interaction of ribosomes translating non-secretory nascent polypeptides with translocation sites in the membrane of the endoplasmic reticulum. EGD1 may act as a transcription factor that exert a negative effect on the expression of several genes that are transcribed by RNA polymerase II. The polypeptide is Nascent polypeptide-associated complex subunit beta (egd1) (Emericella nidulans (strain FGSC A4 / ATCC 38163 / CBS 112.46 / NRRL 194 / M139) (Aspergillus nidulans)).